The following is a 361-amino-acid chain: Phosphoserine aminotransferase (361 aa).

An L-glutamate-binding site is contributed by R42. Residues 76-77 (AR), W102, T153, D173, and Q196 each bind pyridoxal 5'-phosphate. K197 is modified (N6-(pyridoxal phosphate)lysine). Pyridoxal 5'-phosphate is bound at residue 238-239 (NT).

Belongs to the class-V pyridoxal-phosphate-dependent aminotransferase family. SerC subfamily. As to quaternary structure, homodimer. It depends on pyridoxal 5'-phosphate as a cofactor.

Its subcellular location is the cytoplasm. The enzyme catalyses O-phospho-L-serine + 2-oxoglutarate = 3-phosphooxypyruvate + L-glutamate. It carries out the reaction 4-(phosphooxy)-L-threonine + 2-oxoglutarate = (R)-3-hydroxy-2-oxo-4-phosphooxybutanoate + L-glutamate. It functions in the pathway amino-acid biosynthesis; L-serine biosynthesis; L-serine from 3-phospho-D-glycerate: step 2/3. The protein operates within cofactor biosynthesis; pyridoxine 5'-phosphate biosynthesis; pyridoxine 5'-phosphate from D-erythrose 4-phosphate: step 3/5. In terms of biological role, catalyzes the reversible conversion of 3-phosphohydroxypyruvate to phosphoserine and of 3-hydroxy-2-oxo-4-phosphonooxybutanoate to phosphohydroxythreonine. In Yersinia pseudotuberculosis serotype IB (strain PB1/+), this protein is Phosphoserine aminotransferase.